The sequence spans 381 residues: 1-deoxy-D-xylulose 5-phosphate reductoisomerase (381 aa).

The NADPH site is built by Ser10, Gly11, Ser12, Ile13, Gly36, Lys37, Asn38, and Asn121. Lys122 lines the 1-deoxy-D-xylulose 5-phosphate pocket. Glu123 is a binding site for NADPH. Asp147 serves as a coordination point for Mn(2+). 1-deoxy-D-xylulose 5-phosphate is bound by residues Ser148, Glu149, Ser173, and His196. Glu149 is a binding site for Mn(2+). Residue Gly202 coordinates NADPH. Residues Ser209, Asn214, Lys215, and Glu218 each coordinate 1-deoxy-D-xylulose 5-phosphate. Residue Glu218 participates in Mn(2+) binding.

Belongs to the DXR family. Mg(2+) is required as a cofactor. It depends on Mn(2+) as a cofactor.

It carries out the reaction 2-C-methyl-D-erythritol 4-phosphate + NADP(+) = 1-deoxy-D-xylulose 5-phosphate + NADPH + H(+). It functions in the pathway isoprenoid biosynthesis; isopentenyl diphosphate biosynthesis via DXP pathway; isopentenyl diphosphate from 1-deoxy-D-xylulose 5-phosphate: step 1/6. Its function is as follows. Catalyzes the NADPH-dependent rearrangement and reduction of 1-deoxy-D-xylulose-5-phosphate (DXP) to 2-C-methyl-D-erythritol 4-phosphate (MEP). The chain is 1-deoxy-D-xylulose 5-phosphate reductoisomerase from Geobacillus sp. (strain WCH70).